The chain runs to 247 residues: MTAASGVRMYSKAQAQNSQEQLIQRYAPLVKRIAYHLLGRLPASVQVEDLMQAGMIGLLEAAKKYDAGKGASFETYAGIRIRGAMLDEVRKGDWAPRSVHRNTRMVTDAIRAIEARTGRDAKDHEVAAELQLSLEDYYGILSDTQGSRLYSFDDLLQDGEHGLPEDTSLSHNEPIHGLLDERFQAALADAIAKLPERERLVLALYYDEELNLKEIGEVLGVSESRVSQLHSQCAARLRARLADWRSA.

A sigma-70 factor domain-2 region spans residues 22–94 (LIQRYAPLVK…MLDEVRKGDW (73 aa)). Residues 49–52 (DLMQ) carry the Interaction with polymerase core subunit RpoC motif. The segment at 102-171 (NTRMVTDAIR…GLPEDTSLSH (70 aa)) is sigma-70 factor domain-3. Residues 190–238 (AIAKLPERERLVLALYYDEELNLKEIGEVLGVSESRVSQLHSQCAARLR) form a sigma-70 factor domain-4 region. The segment at residues 212-231 (LKEIGEVLGVSESRVSQLHS) is a DNA-binding region (H-T-H motif).

Belongs to the sigma-70 factor family. FliA subfamily.

It is found in the cytoplasm. Functionally, sigma factors are initiation factors that promote the attachment of RNA polymerase to specific initiation sites and are then released. This sigma factor controls the expression of flagella-related genes. Required for the flagellin gene (fliC) expression. The sequence is that of RNA polymerase sigma factor FliA from Pseudomonas aeruginosa (strain ATCC 15692 / DSM 22644 / CIP 104116 / JCM 14847 / LMG 12228 / 1C / PRS 101 / PAO1).